Here is a 142-residue protein sequence, read N- to C-terminus: Hemoglobin subunit alpha (142 aa).

The Globin domain occupies 2–142 (VLSAADKSNV…VGTVLTSKYR (141 aa)). Phosphoserine is present on S4. K8 and K12 each carry N6-succinyllysine. Position 17 is an N6-acetyllysine; alternate (K17). An N6-succinyllysine; alternate modification is found at K17. Y25 bears the Phosphotyrosine mark. S36 carries the post-translational modification Phosphoserine. The residue at position 41 (K41) is an N6-succinyllysine. The residue at position 50 (S50) is a Phosphoserine. H59 contributes to the O2 binding site. A heme b-binding site is contributed by H88. S103 carries the post-translational modification Phosphoserine. Phosphothreonine is present on T109. Phosphoserine occurs at positions 125 and 132. T135 and T138 each carry phosphothreonine. S139 bears the Phosphoserine mark.

It belongs to the globin family. Heterotetramer of two alpha chains and two beta chains. Red blood cells.

Its function is as follows. Involved in oxygen transport from the lung to the various peripheral tissues. Hemopressin acts as an antagonist peptide of the cannabinoid receptor CNR1. Hemopressin-binding efficiently blocks cannabinoid receptor CNR1 and subsequent signaling. The polypeptide is Hemoglobin subunit alpha (HBA) (Pantholops hodgsonii (Chiru)).